A 688-amino-acid polypeptide reads, in one-letter code: Complement C1s subcomponent (688 aa).

Positions Met1–Ala15 are cleaved as a signal peptide. Positions Glu16–Thr130 constitute a CUB 1 domain. Glu60, Asp68, Asp113, Asp131, Ile132, and Glu134 together coordinate Ca(2+). Cys65 and Cys83 are oxidised to a cystine. The region spanning Asp131–Gly172 is the EGF-like; calcium-binding domain. Cystine bridges form between Cys135-Cys147, Cys143-Cys156, and Cys158-Cys171. Residues Asn149, Phe150, and Gly153 each contribute to the Ca(2+) site. A (3R)-3-hydroxyasparagine modification is found at Asn149. Asn174 carries an N-linked (GlcNAc...) asparagine glycan. A disulfide bridge links Cys175 with Cys202. One can recognise a CUB 2 domain in the interval Cys175–Asp290. Glu226, Asp236, Asp275, Gly278, and Gln279 together coordinate Ca(2+). Cysteines 234 and 251 form a disulfide. Sushi domains follow at residues Met292 to Pro356 and Val357 to Pro423. Cystine bridges form between Cys294–Cys341, Cys321–Cys354, Cys359–Cys403, Cys386–Cys421, Cys425–Cys549, Cys595–Cys618, and Cys628–Cys659. A glycan (N-linked (GlcNAc...) asparagine) is linked at Asn406. A Peptidase S1 domain is found at Ile438–Gln680. Active-site charge relay system residues include His475 and Asp529. Catalysis depends on Ser632, which acts as the Charge relay system.

Belongs to the peptidase S1 family. Core component of the complement C1 complex, a calcium-dependent complex composed of 1 molecule of the C1Q subcomplex, 2 molecules of C1R and 2 molecules of C1S. The C1Q subcomplex is composed 18 subunits: 3 chains of C1QA, C1QB, and C1QC trimerize to form 6 collagen-like triple helices connected to six globular ligand-recognition modules. In terms of processing, cleaved and activated by C1R to generate Complement C1s subcomponent heavy and light chains. The iron and 2-oxoglutarate dependent 3-hydroxylation of aspartate and asparagine is (R) stereospecific within EGF domains.

It localises to the secreted. The protein resides in the cell surface. It carries out the reaction Cleavage of Arg-|-Ala bond in complement component C4 to form C4a and C4b, and Lys(or Arg)-|-Lys bond in complement component C2 to form C2a and C2b: the 'classical' pathway C3 convertase.. With respect to regulation, cleaved and activated by C1R. Immunoglobulin-binding promotes autoactivation of C1R, which results in the cleavage of the Arg-Ile bond in the catalytic domain. Inhibited by C1 inhibitor (SERPING1). Component of the complement C1 complex, a multiprotein complex that initiates the classical pathway of the complement system, a cascade of proteins that leads to phagocytosis and breakdown of pathogens and signaling that strengthens the adaptive immune system. C1S is activated following association of the C1 complex with immunoglobulins (IgG or IgM) complexed with antigens to form antigen-antibody complexes on the surface of pathogens. C1S is cleaved and activated by C1R to generate C1s subcomponent heavy and light chains. C1s subcomponent light chain then cleaves and activates C2 and C4, the next components of the classical complement pathway. In terms of biological role, serine protease component of the complement C1 complex, which catalyzes cleavage and activation of C2 and C4, the next components of the classical complement pathway. Also able to cleave C1 inhibitor (SERPING1) in vitro; additional evidence is however required to confirm this result in vivo. Also cleaves IGFBP5 and thereby inhibits the trophic effects of IGF1. The chain is Complement C1s subcomponent from Homo sapiens (Human).